Consider the following 228-residue polypeptide: MDGGLTALQERLKHSFSDTRLLQLALTHRSFSADHNERLEFLGDSVLNLAVSHLLYTRLSALPEGDLSRVRANLVKQDTLHRLALELQLSPLLRLGEGEARSGGPNRPSILADALEALIGAVYLDAGFSAAEALVRRLYESVEINPRMDAVAKDPKTELQEWLQGHKMKLPVYRVAATLGAAHKQTFDVECEVPELGLRERGIGGSRRAGEQAAAAAMLIRLKARGAA.

One can recognise an RNase III domain in the interval Leu-5–Gly-127. Mg(2+) is bound at residue Glu-40. Asp-44 is an active-site residue. 2 residues coordinate Mg(2+): Asp-113 and Glu-116. Residue Glu-116 is part of the active site. One can recognise a DRBM domain in the interval Asp-154 to Ala-224.

The protein belongs to the ribonuclease III family. In terms of assembly, homodimer. Mg(2+) serves as cofactor.

It is found in the cytoplasm. It catalyses the reaction Endonucleolytic cleavage to 5'-phosphomonoester.. Functionally, digests double-stranded RNA. Involved in the processing of primary rRNA transcript to yield the immediate precursors to the large and small rRNAs (23S and 16S). Processes some mRNAs, and tRNAs when they are encoded in the rRNA operon. Processes pre-crRNA and tracrRNA of type II CRISPR loci if present in the organism. This is Ribonuclease 3 from Variovorax paradoxus (strain S110).